We begin with the raw amino-acid sequence, 247 residues long: MGRAFEYRKAAKLKRWGHMAKTFTRLGKQIAIAVKAGGPEPENNPTLRSVIATCKRENMPKDNIERAIKNAMGKDQSDYKSMTYEGYGPHGIAVFVDTLTDNTTRTVADVRSVFNKFGGNLGTMGSLAFLFDHKCMFTFKIKDGMDMEELILDLIDYDVEDEYEQDDEEGTITIYGDPKSYAAIQKHLEECGFEDVGGDFTYIPNDLKEVTPEQRETLDKMIERLEEFDDVQTVYTNMKPEEGGNEE.

It belongs to the TACO1 family.

The protein localises to the cytoplasm. The protein is Probable transcriptional regulatory protein BT_0627 of Bacteroides thetaiotaomicron (strain ATCC 29148 / DSM 2079 / JCM 5827 / CCUG 10774 / NCTC 10582 / VPI-5482 / E50).